We begin with the raw amino-acid sequence, 364 residues long: Nucleoporin SEH1 (364 aa).

WD repeat units follow at residues 10–49, 55–96, 111–152, 160–210, 217–258, and 275–314; these read DHKDLIHDVSYDFHGRRMATCSSDQSVKVWDKSDNGEWNC, THSG…SNDK, DSRT…NLSQ, SCKL…RKYA, TVTD…KESS, and GHNSQVWRVSWNITSTLLASSGDDGCVRLWKANYMDNWKC. The tract at residues 326–364 is disordered; it reads NGAAGQAGTPGAAGTPGGPASQNALQAVAGRKKAQLMPG. The segment covering 327–338 has biased composition (low complexity); that stretch reads GAAGQAGTPGAA. Over residues 355–364 the composition is skewed to basic residues; that stretch reads GRKKAQLMPG.

It belongs to the WD repeat SEC13 family. As to quaternary structure, component of the Nup107-160 subcomplex of the nuclear pore complex (NPC). The Nup107-160 subcomplex includes NUP160, NUP133, NUP107, NUP98, NUP85, NUP43, NUP37, SEH1 and SEC13. Component of the GATOR2 subcomplex, composed of MIOS, SEC13, SEH1L, WDR24 and WDR59. The GATOR2 complex interacts with CASTOR1 and CASTOR2; the interaction is negatively regulated by arginine. The GATOR2 complex interacts with SESN1, SESN2 and SESN3; the interaction is negatively regulated by amino acids.

The protein localises to the chromosome. It localises to the centromere. It is found in the kinetochore. The protein resides in the nucleus. Its subcellular location is the nuclear pore complex. The protein localises to the lysosome membrane. With respect to regulation, the GATOR2 complex is negatively regulated by the upstream amino acid sensors CASTOR1 and SESN2, which sequester the GATOR2 complex in absence of amino acids. In the presence of abundant amino acids, GATOR2 is released from CASTOR1 and SESN2 and activated. Component of the Nup107-160 subcomplex of the nuclear pore complex (NPC). The Nup107-160 subcomplex is required for the assembly of a functional NPC. The Nup107-160 subcomplex is also required for normal kinetochore microtubule attachment, mitotic progression and chromosome segregation. This subunit plays a role in recruitment of the Nup107-160 subcomplex to the kinetochore. Its function is as follows. As a component of the GATOR2 complex, functions as an activator of the amino acid-sensing branch of the mTORC1 signaling pathway. The GATOR2 complex indirectly activates mTORC1 through the inhibition of the GATOR1 subcomplex. GATOR2 probably acts as an E3 ubiquitin-protein ligase toward GATOR1. In the presence of abundant amino acids, the GATOR2 complex mediates ubiquitination of the NPRL2 core component of the GATOR1 complex, leading to GATOR1 inactivation. In the absence of amino acids, GATOR2 is inhibited, activating the GATOR1 complex. The chain is Nucleoporin SEH1 (seh1l) from Osmerus mordax (Rainbow smelt).